The chain runs to 362 residues: Probable branched-chain-amino-acid aminotransferase (362 aa).

Lysine 202 carries the N6-(pyridoxal phosphate)lysine modification.

It belongs to the class-IV pyridoxal-phosphate-dependent aminotransferase family. The cofactor is pyridoxal 5'-phosphate.

The enzyme catalyses L-leucine + 2-oxoglutarate = 4-methyl-2-oxopentanoate + L-glutamate. It carries out the reaction L-isoleucine + 2-oxoglutarate = (S)-3-methyl-2-oxopentanoate + L-glutamate. The catalysed reaction is L-valine + 2-oxoglutarate = 3-methyl-2-oxobutanoate + L-glutamate. Its pathway is amino-acid biosynthesis; L-isoleucine biosynthesis; L-isoleucine from 2-oxobutanoate: step 4/4. The protein operates within amino-acid biosynthesis; L-leucine biosynthesis; L-leucine from 3-methyl-2-oxobutanoate: step 4/4. It functions in the pathway amino-acid biosynthesis; L-valine biosynthesis; L-valine from pyruvate: step 4/4. Functionally, acts on leucine, isoleucine and valine. In Streptomyces coelicolor (strain ATCC BAA-471 / A3(2) / M145), this protein is Probable branched-chain-amino-acid aminotransferase (ilvE).